A 502-amino-acid chain; its full sequence is Hexose transporter 1 (502 aa).

Topologically, residues 1 to 26 (MKKSSKEISSSQSLKNGGSDHFFNTS) are cytoplasmic. A helical transmembrane segment spans residues 27–47 (LMYVLAACLASFIFGYQVSVL). Residues 48 to 76 (NTIKNFIVIEFGWCTGNKVECDDSTLKSS) are Extracellular-facing. A disulfide bridge connects residues Cys-61 and Cys-68. A helical transmembrane segment spans residues 77-97 (FLLASVFIGAVVGSGFSGYLV). At 98–102 (QHGRR) the chain is on the cytoplasmic side. A helical transmembrane segment spans residues 103–123 (FSLLVIYNFFILVSILTSITH). Residues 124 to 132 (HFHTILFSR) are Extracellular-facing. Residues 133–153 (LLSGFGIGLITVSVPMYISEM) form a helical membrane-spanning segment. The Cytoplasmic portion of the chain corresponds to 154–163 (THKDKKGAYG). A helical transmembrane segment spans residues 164–184 (VLHQLFITFGIFVAVLLGMAM). Gln-167 serves as a coordination point for alpha-D-glucose. Gln-167 provides a ligand contact to beta-D-glucose. Residues 185–205 (GEAPDAKSVDALGEFQKIWWR) are Extracellular-facing. Residues 206–226 (LMFFFPCLISILGIVLLTFFY) traverse the membrane as a helical segment. At 227–291 (KEETPYYLFE…RAMQIPSYRN (65 aa)) the chain is on the cytoplasmic side. A helical membrane pass occupies residues 292–312 (VILLGCILSGLQQFTGINVLV). Gln-303, Gln-304, and Asn-309 together coordinate alpha-D-glucose. Beta-D-glucose is bound at residue Gln-303. Asn-309 is a beta-D-glucose binding site. At 313–329 (SNSNELYKEFLSNKLIT) the chain is on the extracellular side. Residues 330–350 (TLSVIMTVVNFLMTFPAIYIV) form a helical membrane-spanning segment. A beta-D-glucose-binding site is contributed by Asn-339. Residues 351–356 (EKLGRK) lie on the Cytoplasmic side of the membrane. A helical transmembrane segment spans residues 357 to 377 (TLLLCGCAGVICAFLPTAIAN). Topologically, residues 378–390 (QIDSTSAFVKNLS) are extracellular. A helical membrane pass occupies residues 391 to 411 (IAATFVMIISFAVSYGPVLWI). Trp-410 is an alpha-D-glucose binding site. Over 412–427 (YLHEMFPSEIKDSAAS) the chain is Cytoplasmic. The helical transmembrane segment at 428 to 448 (LASLVNWVCAIIVVFPSDIII) threads the bilayer. Topologically, residues 449–453 (KKSPT) are extracellular. The chain crosses the membrane as a helical span at residues 454 to 474 (ILFFIFSGMSILSFLFIFFFI). The Cytoplasmic segment spans residues 475–502 (KETKGGEIGTSPYITMEERQKHMGKSAV).

This sequence belongs to the major facilitator superfamily. Sugar transporter (TC 2.A.1.1) family. As to quaternary structure, homodimer.

The protein resides in the cell membrane. It catalyses the reaction D-glucose(out) = D-glucose(in). The enzyme catalyses D-fructose(out) = D-fructose(in). It carries out the reaction D-galactose(in) = D-galactose(out). The catalysed reaction is D-mannose(out) = D-mannose(in). It catalyses the reaction D-glucosamine(out) = D-glucosamine(in). The enzyme catalyses D-xylose(out) = D-xylose(in). Inhibited by compound 3361 (3-O-((undec-10-en)-1-yl)-D-glucose). Its function is as follows. Sodium-independent facilitative hexose transporter. Can transport D-glucose and D-fructose. Can transport D-mannose, D-galactose, D-xylose and D-glucosamine. This Plasmodium vivax (strain Brazil I) protein is Hexose transporter 1.